Consider the following 315-residue polypeptide: Transaldolase (315 aa).

K131 functions as the Schiff-base intermediate with substrate in the catalytic mechanism.

It belongs to the transaldolase family. Type 1 subfamily. Homodimer.

The protein localises to the cytoplasm. It carries out the reaction D-sedoheptulose 7-phosphate + D-glyceraldehyde 3-phosphate = D-erythrose 4-phosphate + beta-D-fructose 6-phosphate. Its pathway is carbohydrate degradation; pentose phosphate pathway; D-glyceraldehyde 3-phosphate and beta-D-fructose 6-phosphate from D-ribose 5-phosphate and D-xylulose 5-phosphate (non-oxidative stage): step 2/3. Its function is as follows. Transaldolase is important for the balance of metabolites in the pentose-phosphate pathway. This Actinobacillus pleuropneumoniae serotype 7 (strain AP76) protein is Transaldolase.